The following is a 446-amino-acid chain: NADH oxidase (446 aa).

FAD contacts are provided by residues 7-11 (GCTHA), E32, C42, V79, 110-113 (TTGS), K132, and Y157. The active-site Proton acceptor is H10. C42 functions as the Redox-active in the catalytic mechanism. C42 bears the Cysteine sulfinic acid (-SO2H) mark. NAD(+)-binding positions include 150–165 (VVVV…LVEA), D177, Y186, and G243. FAD is bound by residues 271 to 281 (TSNPDIFAAGD), L298, A299, and T300. G328 serves as a coordination point for NAD(+). F424 is an FAD binding site.

Belongs to the class-III pyridine nucleotide-disulfide oxidoreductase family. In terms of assembly, homodimer. FAD serves as cofactor. Post-translationally, the N-terminus is blocked.

The enzyme catalyses 2 NADH + O2 + 2 H(+) = 2 NAD(+) + 2 H2O. Its function is as follows. Catalyzes the four-electron reduction of molecular oxygen to water. The polypeptide is NADH oxidase (nox) (Enterococcus faecalis (strain ATCC 700802 / V583)).